The following is a 338-amino-acid chain: MDIRQDYPLSKRNTFGIAARTDWWIDYTCDADIDRLVKDEFFQDCRVQTIGEGSNLLFLANFHGILLHSEVKGITELHKDQDSILLRVGSGMVWDDFVAYAVENNYYGIENLSLIPGQVGASAVQNIGAYGVEVSQLIEAVHARHYRTGESRVFRNEDCRYAYRYSIFKEPDYAEWTIMYVDYRLRLKPSFSLEYKALAKVLEEERITPTLQSIRDTVIRIRNSKLPDPATIGNAGSFFVNPVVSAEKFNTLQTEYPSIPSYPQPDGSVKVPAGWLIEQCGYKGHRSGAVGVYEHQALVLVNYGGATGTQVGALAEEIIGNVRQKFGITLHPEVKYIL.

Residues 17-188 (IAARTDWWID…MYVDYRLRLK (172 aa)) enclose the FAD-binding PCMH-type domain. Residue R164 is part of the active site. S237 acts as the Proton donor in catalysis. The active site involves E333.

The protein belongs to the MurB family. Requires FAD as cofactor.

Its subcellular location is the cytoplasm. The catalysed reaction is UDP-N-acetyl-alpha-D-muramate + NADP(+) = UDP-N-acetyl-3-O-(1-carboxyvinyl)-alpha-D-glucosamine + NADPH + H(+). The protein operates within cell wall biogenesis; peptidoglycan biosynthesis. In terms of biological role, cell wall formation. The polypeptide is UDP-N-acetylenolpyruvoylglucosamine reductase (Porphyromonas gingivalis (strain ATCC BAA-308 / W83)).